The following is a 522-amino-acid chain: Sterol O-acyltransferase 2 (522 aa).

2 disordered regions span residues 1–36 (MEPGGARLRLQRTEGLGGERERQPCGDGNTETHRAP) and 74–96 (SYPSQDKPLPPPPPGSLSRTQEP). Over 1-120 (MEPGGARLRL…LDELMEVQHF (120 aa)) the chain is Cytoplasmic. Positions 17–36 (GGERERQPCGDGNTETHRAP) are enriched in basic and acidic residues. Histidine 119 provides a ligand contact to cholesterol. Residues 121–142 (RTIYHMFIAGLCVFIISTLAID) form a helical membrane-spanning segment. Residues 143 to 162 (FIDEGRLLLEFDLLIFSFGQ) are Lumenal-facing. A helical transmembrane segment spans residues 163–188 (LPLALVTWVPMFLSTLLAPYQALRLW). Topologically, residues 189–196 (ARGTWTQA) are cytoplasmic. The helical transmembrane segment at 197–220 (TGLGCALLAAHAVVLCALPVHVAV) threads the bilayer. Residues 221–228 (EHQLPPAS) lie on the Lumenal side of the membrane. The chain crosses the membrane as a helical span at residues 229–252 (RCVLVFEQVRFLMKSYSFLREAVP). The Cytoplasmic segment spans residues 253-293 (GTLRARRGEGIQAPSFSSYLYFLFCPTLIYRETYPRTPYVR). Cysteine 277 carries the cysteine sulfenic acid (-SOH); alternate modification. Cysteine 277 participates in a covalent cross-link: Glycyl cysteine thioester (Cys-Gly) (interchain with G-Cter in ubiquitin); alternate. Residues 294–326 (WNYVAKNFAQALGCVLYACFILGRLCVPVFANM) form a helical membrane-spanning segment. Residues 327 to 343 (SREPFSTRALVLSILHA) are Lumenal-facing. The chain crosses the membrane as a helical span at residues 344–369 (TLPGIFMLLLIFFAFLHCWLNAFAEM). Over 370 to 417 (LRFGDRMFYRDWWNSTSFSNYYRTWNVVVHDWLYSYVYQDGLRLLGAR) the chain is Cytoplasmic. The short motif at 377–383 (FYRDWWN) is the FYXDWWN motif element. The an acyl-CoA site is built by asparagine 389, arginine 392, asparagine 395, histidine 399, tyrosine 407, and serine 430. The helical transmembrane segment at 418 to 442 (ARGVAMLGVFLVSAVAHEYIFCFVL) threads the bilayer. Residue histidine 434 is part of the active site. The Lumenal portion of the chain corresponds to 443–448 (GFFYPV). A helical membrane pass occupies residues 449–464 (MLILFLVIGGMLNFMM). At 465–470 (HDQRTG) the chain is on the cytoplasmic side. The helical transmembrane segment at 471 to 502 (PAWNVLMWTMLFLGQGIQVSLYCQEWYARRHC) threads the bilayer. Over 503–522 (PLPQATFWGLVTPRSWSCHT) the chain is Lumenal.

It belongs to the membrane-bound acyltransferase family. Sterol o-acyltransferase subfamily. As to quaternary structure, may form homo- or heterodimers. Interacts with INSIG1; the interaction is direct and promotes association with AMFR/gp78. Post-translationally, polyubiquitinated by AMFR/gp78 at Cys-277, leading to its degradation when the lipid levels are low. Association with AMFR/gp78 is mediated via interaction with INSIG1. High concentration of cholesterol and fatty acid results in Cys-277 oxidation, preventing ubiquitination at the same site, resulting in protein stabilization. Oxidized at Cys-277: high concentration of cholesterol and fatty acid induce reactive oxygen species, which oxidizes Cys-277, preventing ubiquitination at the same site, and resulting in protein stabilization. As to expression, expression seems confined in hepatocytes and enterocytes.

It localises to the endoplasmic reticulum membrane. It carries out the reaction a sterol + a long-chain fatty acyl-CoA = a long-chain 3-hydroxysterol ester + CoA. The enzyme catalyses cholesterol + an acyl-CoA = a cholesterol ester + CoA. It catalyses the reaction cholesterol + (9Z)-octadecenoyl-CoA = cholesteryl (9Z-octadecenoate) + CoA. The catalysed reaction is (5Z,8Z,11Z,14Z,17Z)-eicosapentaenoyl-CoA + cholesterol = (5Z,8Z,11Z,14Z,17Z-eicosapentaenoyl)-cholesterol + CoA. It carries out the reaction (9Z,12Z,15Z)-octadecatrienoyl-CoA + cholesterol = (9Z,12Z,15Z-octadecatrienoyl)-cholesterol + CoA. The enzyme catalyses (5Z,8Z,11Z,14Z)-eicosatetraenoyl-CoA + cholesterol = cholesteryl (5Z,8Z,11Z,14Z)-eicosatetraenoate + CoA. Catalyzes the formation of fatty acid-cholesterol esters, which are less soluble in membranes than cholesterol. Plays a role in lipoprotein assembly and dietary cholesterol absorption. Utilizes oleoyl-CoA ((9Z)-octadecenoyl-CoA) and linolenoyl-CoA ((9Z,12Z,15Z)-octadecatrienoyl-CoA) as substrates. May provide cholesteryl esters for lipoprotein secretion from hepatocytes and intestinal mucosa. Its function is as follows. Has lower enzymatic activity compared to isoform 1. The sequence is that of Sterol O-acyltransferase 2 from Homo sapiens (Human).